Here is a 287-residue protein sequence, read N- to C-terminus: Nucleoside kinase (287 aa).

Substrate is bound by residues aspartate 13, asparagine 28, glycine 38, and asparagine 42. Glutamine 102 is an ATP binding site. The substrate site is built by serine 104 and glutamine 150. ATP contacts are provided by residues asparagine 173 and 196-201; that span reads TNGERG. Aspartate 227 provides a ligand contact to substrate. The active-site Proton acceptor is the aspartate 227.

Belongs to the carbohydrate kinase PfkB family. In terms of assembly, homodimer. Requires Mg(2+) as cofactor. It depends on Co(2+) as a cofactor.

The catalysed reaction is adenosine + ATP = AMP + ADP + H(+). It carries out the reaction cytidine + ATP = CMP + ADP + H(+). It catalyses the reaction guanosine + ATP = GMP + ADP + H(+). The enzyme catalyses inosine + ATP = IMP + ADP + H(+). Functionally, nucleoside kinase with broad substrate specificity. Catalyzes the phosphorylation of a variety of nucleosides to the corresponding nucleoside 5'-mono-phosphate in the presence of phosphate donors and divalent cations. Displays the most efficient activity with guanosine, followed by inosine, cytidine, and adenosine. Negligible enzymatic activity is detected with thymidine, uridine, and 2-deoxyadenosine. ATP is the most efficient phosphate donor, but can also use GTP and ITP. Shows no sugar kinase activity, since it is unable to phosphorylate ribose, fructose-1-phosphate, or fructose-6-phosphate. The sequence is that of Nucleoside kinase from Thermoplasma acidophilum (strain ATCC 25905 / DSM 1728 / JCM 9062 / NBRC 15155 / AMRC-C165).